Here is a 512-residue protein sequence, read N- to C-terminus: Kynurenine 3-monooxygenase (512 aa).

It belongs to the aromatic-ring hydroxylase family. KMO subfamily. Requires FAD as cofactor.

The protein resides in the mitochondrion outer membrane. The catalysed reaction is L-kynurenine + NADPH + O2 + H(+) = 3-hydroxy-L-kynurenine + NADP(+) + H2O. The protein operates within cofactor biosynthesis; NAD(+) biosynthesis; quinolinate from L-kynurenine: step 1/3. Catalyzes the hydroxylation of L-kynurenine (L-Kyn) to form 3-hydroxy-L-kynurenine (L-3OHKyn). Required for synthesis of quinolinic acid. In Aspergillus clavatus (strain ATCC 1007 / CBS 513.65 / DSM 816 / NCTC 3887 / NRRL 1 / QM 1276 / 107), this protein is Kynurenine 3-monooxygenase (bna4).